Consider the following 459-residue polypeptide: MAPTQNTICSKHVAVIGAGAAGLVTARELRREGHTVVVFDREKQVGGLWNYSSKADSDPLSLDTTRTIVHTSIYESLRTNLPRECMGFTDFPFVPRIHDISRDSRRYPSHREVLAYLQDFAREFKIEEMVRFETEVVCVEPVNGKWSVRSKNSVGFAAHEIFDAVVVCSGHFTEPNVAHIPGIKSWPGKQIHSHNYRVPGPFNNEVVVVIGNYASGADISRDIAKVAKEVHIASRASESDTYQKLPVPQNNLWVHSEIDFAHQDGSILFKNGKVVYADTIVHCTGYKYYFPFLETNGYININENRVEPLYKHVFLPALAPSLSFIGLPGMAIQFVMFEIQSKWVAAVLSGRVILPSQDKMMEDIIEWYATLDVLGIPKRHTHKLGKISCEYLNWIAEECHCSPVENWRIQEVERGFQRMVSHPEIYRDEWDDDDLMEEAYKDFARKKLISSHPSYFLES.

17–22 provides a ligand contact to FAD; sequence GAGAAG. Residue 211-216 coordinates NADP(+); it reads GNYASG.

This sequence belongs to the FMO family. The cofactor is FAD. Mainly expressed in leaves. Low levels in flowers and seeds.

It carries out the reaction a (Z)-omega-(methylsulfanyl)-N-sulfo-alkylhydroximate S-glucoside + NADPH + O2 + H(+) = a (Z)-omega-(methylsulfinyl)-alkyl-glucosinolate + NADP(+) + H2O. Its function is as follows. Catalyzes the conversion of methylthioalkyl glucosinolates into methylsulfinylalkyl glucosinolates. Able to S-oxygenate both desulfo- and intact 4-methylthiobutyl glucosinolates, but no activity with methionine, dihomomethionine or 5-methylthiopentaldoxime. The sequence is that of Flavin-containing monooxygenase FMO GS-OX1 (FMOGS-OX1) from Arabidopsis thaliana (Mouse-ear cress).